We begin with the raw amino-acid sequence, 474 residues long: bZIP transcription factor hapX (474 aa).

Residues 1 to 10 (MSTSAGTPTS) are compositionally biased toward polar residues. The segment at 1 to 82 (MSTSAGTPTS…RKAQNRAAQR (82 aa)) is disordered. The bZIP domain occupies 67-108 (DTPPTKRKAQNRAAQRAFRERRAARVGELEEQIKKIEEENER). The basic motif stretch occupies residues 72-91 (KRKAQNRAAQRAFRERRAAR). Residues 95–102 (LEEQIKKI) form a leucine-zipper region. 3 disordered regions span residues 201–242 (QMQT…TDFT), 282–317 (EDQP…GDVL), and 429–449 (TLPN…LTNR). Polar residues predominate over residues 287–307 (DRSNQPSQLTKLPPIQNISQF).

It belongs to the bZIP family. YAP subfamily.

It is found in the nucleus. Its function is as follows. Iron regulator crucial for the adaptation to iron starvation and iron excess, but is dispensable for virulence. SreA represses the expression of hapX and the siderophore system during iron sufficient conditions by an iron-sensing mechanism, while hapX represses sreA and activates the siderophore system during iron-limiting conditions, resulting in efficient iron uptake and inhibition of iron-consuming pathways. HapX targets include genes encoding a number of key iron-regulated factors such as the vacuolar iron importer cccA, as well as hemA, cycA and lysF involved in heme biosynthesis, respiration and lysine biosynthesis, respectively. Activation of the vacuolar iron importer cccA during high iron conditions is essential for iron detoxification. This Arthroderma benhamiae (strain ATCC MYA-4681 / CBS 112371) (Trichophyton mentagrophytes) protein is bZIP transcription factor hapX.